The sequence spans 3364 residues: Salivary gland surface protein 1 (3364 aa).

Beta-propeller regions lie at residues 1–344 (MLRI…VVDA) and 705–1216 (FEQE…LKAL). Asparagine 59 carries N-linked (GlcNAc...) asparagine glycosylation. Disulfide bonds link cysteine 251–cysteine 297 and cysteine 1128–cysteine 1139. The rhs/YD-repeats stretch occupies residues 345–2733 (VEPKLDQGSP…PVSQIDPDGQ (2389 aa)). A glycan (N-linked (GlcNAc...) asparagine) is linked at asparagine 1149. The carbohydrate-binding module (CBM) stretch occupies residues 1345-1494 (NQELVQFLGF…VHVDHVRLSP (150 aa)). The segment at 1575 to 1715 (HSWVESFSPY…VGIKDVIVME (141 aa)) is lectin carbohydrate-recognition domain (lectin-CRD). Positions 2225–2304 (HDKCDQNLIP…SEKMLEQGYP (80 aa)) are wedge domain. Cystine bridges form between cysteine 2253–cysteine 2285 and cysteine 2407–cysteine 2421. 5 consecutive transmembrane segments (helical) span residues 2734–2754 (IAVT…LGAA), 2774–2794 (IGLF…AATF), 2805–2825 (MIAG…LGAA), 2844–2864 (WNGL…FVGI), and 2878–2898 (MIYA…GGGM). The tract at residues 3126–3216 (YSPDSDGNQI…ARIAPAALRN (91 aa)) is tox-SGS.

Probably cleaved at the C-terminus. As to expression, female saliva (at protein level). Female salivary gland (at protein level). Not detected in female carcass without salivary glands. Not detected in male tissues.

The protein resides in the cell membrane. It localises to the secreted. (Microbial infection) Facilitates, but is not essential for, invasion of salivary glands by Plasmodium gallinaceum. Plays a role in Plasmodium gallinaceum oocyst development in mosquito midgut. Its function is as follows. (Microbial infection) Probably facilitates Zika virus replication in salivary glands. The sequence is that of Salivary gland surface protein 1 from Aedes aegypti (Yellowfever mosquito).